We begin with the raw amino-acid sequence, 439 residues long: tRNA-2-methylthio-N(6)-dimethylallyladenosine synthase (439 aa).

Residues 1–117 form the MTTase N-terminal domain; it reads MKFYIRTFGC…IGNLVKRALN (117 aa). [4Fe-4S] cluster is bound by residues cysteine 10, cysteine 46, cysteine 80, cysteine 153, cysteine 157, and cysteine 160. One can recognise a Radical SAM core domain in the interval 139–371; that stretch reads PISKHHAWIT…MELQKRINLE (233 aa). The TRAM domain maps to 369–436; it reads NLEENEKYLE…PGPLYGEVVN (68 aa).

The protein belongs to the methylthiotransferase family. MiaB subfamily. Monomer. The cofactor is [4Fe-4S] cluster.

The protein resides in the cytoplasm. The catalysed reaction is N(6)-dimethylallyladenosine(37) in tRNA + (sulfur carrier)-SH + AH2 + 2 S-adenosyl-L-methionine = 2-methylsulfanyl-N(6)-dimethylallyladenosine(37) in tRNA + (sulfur carrier)-H + 5'-deoxyadenosine + L-methionine + A + S-adenosyl-L-homocysteine + 2 H(+). Functionally, catalyzes the methylthiolation of N6-(dimethylallyl)adenosine (i(6)A), leading to the formation of 2-methylthio-N6-(dimethylallyl)adenosine (ms(2)i(6)A) at position 37 in tRNAs that read codons beginning with uridine. This is tRNA-2-methylthio-N(6)-dimethylallyladenosine synthase from Petrotoga mobilis (strain DSM 10674 / SJ95).